A 270-amino-acid chain; its full sequence is Putative phosphoenolpyruvate synthase regulatory protein (270 aa).

150 to 157 (GVSRCGKT) serves as a coordination point for ADP.

It belongs to the pyruvate, phosphate/water dikinase regulatory protein family. PSRP subfamily.

It carries out the reaction [pyruvate, water dikinase] + ADP = [pyruvate, water dikinase]-phosphate + AMP + H(+). It catalyses the reaction [pyruvate, water dikinase]-phosphate + phosphate + H(+) = [pyruvate, water dikinase] + diphosphate. In terms of biological role, bifunctional serine/threonine kinase and phosphorylase involved in the regulation of the phosphoenolpyruvate synthase (PEPS) by catalyzing its phosphorylation/dephosphorylation. In Aeromonas hydrophila subsp. hydrophila (strain ATCC 7966 / DSM 30187 / BCRC 13018 / CCUG 14551 / JCM 1027 / KCTC 2358 / NCIMB 9240 / NCTC 8049), this protein is Putative phosphoenolpyruvate synthase regulatory protein.